Reading from the N-terminus, the 338-residue chain is Methionine import ATP-binding protein MetN 2 (338 aa).

The ABC transporter domain maps to 2–242; it reads IEIEKVCVDF…PQHAFTQQLV (241 aa). 39–46 is a binding site for ATP; sequence GTSGAGKS.

This sequence belongs to the ABC transporter superfamily. Methionine importer (TC 3.A.1.24) family. The complex is composed of two ATP-binding proteins (MetN), two transmembrane proteins (MetI) and a solute-binding protein (MetQ).

It localises to the cell inner membrane. It carries out the reaction L-methionine(out) + ATP + H2O = L-methionine(in) + ADP + phosphate + H(+). The enzyme catalyses D-methionine(out) + ATP + H2O = D-methionine(in) + ADP + phosphate + H(+). Functionally, part of the ABC transporter complex MetNIQ involved in methionine import. Responsible for energy coupling to the transport system. The polypeptide is Methionine import ATP-binding protein MetN 2 (Salmonella typhi).